The primary structure comprises 398 residues: Alpha-ketoglutarate-dependent dioxygenase bsc9 (398 aa).

2 residues coordinate Fe cation: His167 and Asp169. Thr212 is a 2-oxoglutarate binding site. A Fe cation-binding site is contributed by His365. Arg377 provides a ligand contact to 2-oxoglutarate.

It belongs to the TfdA dioxygenase family. Fe(2+) is required as a cofactor.

The protein operates within mycotoxin biosynthesis. Functionally, alpha-ketoglutarate dependent dioxygenase; part of the gene cluster that mediates the biosynthesis of the diterpene glucoside brassicicene C. In the first step of the brassicicene C biosynthesis, the bifunctional diterpene synthase bsc8 that possesses both prenyl transferase and terpene cyclase activity, converts isopentenyl diphosphate and dimethylallyl diphosphate into geranylgeranyl diphosphate (GGDP) that is further converted into fusicocca-2,10(14)-diene, the first precursor for brassicicene C. Fusicocca-2,10(14)-diene is then substrate of cytochrome P450 monooxygenase bsc1 for hydroxylation at the C-8 position. Oxidation at C-16 position to aldehyde is then catalyzed by the cytochrome P450 monooyxygenase bsc7, yielding fusicocca-2,10(14)-diene-8-beta,16-diol. Follows the isomerization of the double bond and reduction of aldehyde to alcohol catalyzed by the short-chain dehydrogenase/reductase bsc3 to yield the diol compound fusicocca-1,10(14)-diene-8 beta,16-diol. The next step is the oxidation at the C-3 position of fusicocca-2,10(14)-diene-8-beta,16-diol catalyzed by the alpha-ketoglutarate dependent dioxygenase bsc9, to produce a triol compound. Methylation of the hydroxy group at position 16 is performed by the methyltransferase bsc6. 16-O-methylation is followed by oxidation at the C-13 position to ketone and an alkyl shift of the methyl group leads to brassicicene C. Although the probable acetyltransferase bsc4 is included in the gene cluster, no acetylation reactions are necessary for brassicicene C biosynthesis. However, the fact that brassicicene E, which is a structurally related compound having an acetoxy group at position 12, was previously isolated from another strain of A.brassicicola suggests that the ATCC 96836 strain might also produce a small amount of brassicicene E. The polypeptide is Alpha-ketoglutarate-dependent dioxygenase bsc9 (Alternaria brassicicola (Dark leaf spot agent)).